Here is an 823-residue protein sequence, read N- to C-terminus: Lon protease (823 aa).

The region spanning 22–217 (LPLLPVRDVV…KVNEHLNKEH (196 aa)) is the Lon N-terminal domain. Residue 369–376 (GPPGVGKT) participates in ATP binding. One can recognise a Lon proteolytic domain in the interval 605–786 (KNEVGIVTGL…DDVLAVALET (182 aa)). Catalysis depends on residues Ser692 and Lys735. Residues 788 to 823 (PPPPPASEGKPAATVKAPPRRGIAAPRKGAMAGAKS) form a disordered region.

This sequence belongs to the peptidase S16 family. In terms of assembly, homohexamer. Organized in a ring with a central cavity.

It is found in the cytoplasm. The catalysed reaction is Hydrolysis of proteins in presence of ATP.. In terms of biological role, ATP-dependent serine protease that mediates the selective degradation of mutant and abnormal proteins as well as certain short-lived regulatory proteins. Required for cellular homeostasis and for survival from DNA damage and developmental changes induced by stress. Degrades polypeptides processively to yield small peptide fragments that are 5 to 10 amino acids long. Binds to DNA in a double-stranded, site-specific manner. This chain is Lon protease, found in Geobacter metallireducens (strain ATCC 53774 / DSM 7210 / GS-15).